The sequence spans 875 residues: Probable inorganic carbon transporter subunit DabA (875 aa).

The Zn(2+) site is built by C399, D401, H581, and C596.

It belongs to the inorganic carbon transporter (TC 9.A.2) DabA family. Forms a complex with DabB. Zn(2+) serves as cofactor.

Its subcellular location is the cell membrane. Its function is as follows. Part of an energy-coupled inorganic carbon pump. The polypeptide is Probable inorganic carbon transporter subunit DabA (Bacillus thuringiensis (strain Al Hakam)).